The primary structure comprises 273 residues: 1,4-dihydroxy-2-naphthoyl-CoA synthase (273 aa).

Substrate contacts are provided by residues R34, 73–77, Y85, 117–121, T143, S149, Y246, and K261; these read SGGDQ and YAVGG. 142-144 is a hydrogencarbonate binding site; it reads QTG. The segment covering 254-265 has biased composition (basic and acidic residues); that stretch reads GRDAFKEKRDPD. The disordered stretch occupies residues 254-273; sequence GRDAFKEKRDPDFDQFPKFP.

Belongs to the enoyl-CoA hydratase/isomerase family. MenB subfamily. Requires hydrogencarbonate as cofactor.

It carries out the reaction 2-succinylbenzoyl-CoA + H(+) = 1,4-dihydroxy-2-naphthoyl-CoA + H2O. It participates in quinol/quinone metabolism; 1,4-dihydroxy-2-naphthoate biosynthesis; 1,4-dihydroxy-2-naphthoate from chorismate: step 6/7. The protein operates within quinol/quinone metabolism; menaquinone biosynthesis. Converts o-succinylbenzoyl-CoA (OSB-CoA) to 1,4-dihydroxy-2-naphthoyl-CoA (DHNA-CoA). This chain is 1,4-dihydroxy-2-naphthoyl-CoA synthase, found in Staphylococcus aureus (strain MSSA476).